The following is a 128-amino-acid chain: UPF0102 protein BCG_2919c (128 aa).

The protein belongs to the UPF0102 family.

The chain is UPF0102 protein BCG_2919c from Mycobacterium bovis (strain BCG / Pasteur 1173P2).